A 450-amino-acid chain; its full sequence is tRNA-2-methylthio-N(6)-dimethylallyladenosine synthase (450 aa).

In terms of domain architecture, MTTase N-terminal spans Lys17 to Ala131. The [4Fe-4S] cluster site is built by Cys26, Cys62, Cys94, Cys168, Cys172, and Cys175. One can recognise a Radical SAM core domain in the interval Arg154–Lys385. In terms of domain architecture, TRAM spans Gln388–Gln450.

The protein belongs to the methylthiotransferase family. MiaB subfamily. As to quaternary structure, monomer. Requires [4Fe-4S] cluster as cofactor.

The protein localises to the cytoplasm. The enzyme catalyses N(6)-dimethylallyladenosine(37) in tRNA + (sulfur carrier)-SH + AH2 + 2 S-adenosyl-L-methionine = 2-methylsulfanyl-N(6)-dimethylallyladenosine(37) in tRNA + (sulfur carrier)-H + 5'-deoxyadenosine + L-methionine + A + S-adenosyl-L-homocysteine + 2 H(+). Its function is as follows. Catalyzes the methylthiolation of N6-(dimethylallyl)adenosine (i(6)A), leading to the formation of 2-methylthio-N6-(dimethylallyl)adenosine (ms(2)i(6)A) at position 37 in tRNAs that read codons beginning with uridine. The sequence is that of tRNA-2-methylthio-N(6)-dimethylallyladenosine synthase from Protochlamydia amoebophila (strain UWE25).